The chain runs to 484 residues: Mitogen-activated protein kinase SLT2/MPK1 (484 aa).

A Protein kinase domain is found at Phe23–Leu318. ATP is bound by residues Ile29 to Val37 and Lys54. Residue Asp153 is the Proton acceptor of the active site. Thr190 bears the Phosphothreonine mark. Residues Thr190–Tyr192 carry the TXY motif. At Tyr192 the chain carries Phosphotyrosine. The segment covering Gln383 to Pro392 has biased composition (low complexity). 2 disordered regions span residues Gln383–Ser403 and Ile426–Asp464.

Belongs to the protein kinase superfamily. CMGC Ser/Thr protein kinase family. MAP kinase subfamily. Interacts with RLM1. Mg(2+) serves as cofactor. In terms of processing, dually phosphorylated on Thr-190 and Tyr-192, which activates the enzyme.

It carries out the reaction L-seryl-[protein] + ATP = O-phospho-L-seryl-[protein] + ADP + H(+). It catalyses the reaction L-threonyl-[protein] + ATP = O-phospho-L-threonyl-[protein] + ADP + H(+). Activated by tyrosine and threonine phosphorylation by MKK1 and MKK2. Functionally, serine/threonine protein kinase involved in a signal transduction pathway that plays a role in yeast cell morphogenesis and cell growth. This pathway seems to start by SMP3; then involve the kinase PKC1 that may act the BCK1 kinase that then phosphorylates MKK1 and MKK2 which themselves phosphorylate the SLT2/MPK1 kinase which itself then phosphorylates and activates the transcription factor RLM1. Directly phosphorylates BCY1 upon TOR complex 1 (TORC1) inhibition. In Saccharomyces cerevisiae (strain ATCC 204508 / S288c) (Baker's yeast), this protein is Mitogen-activated protein kinase SLT2/MPK1 (SLT2).